The sequence spans 326 residues: Diphthine methyltransferase (326 aa).

WD repeat units follow at residues 65-105 (MHCD…ELMF), 113-152 (DSSV…IKNK), 155-195 (EHDY…SCIW), and 293-326 (EHES…WEDI).

This sequence belongs to the DPH7 family.

The protein localises to the cytoplasm. The protein resides in the nucleus. The enzyme catalyses diphthine methyl ester-[translation elongation factor 2] + H2O = diphthine-[translation elongation factor 2] + methanol + H(+). The protein operates within protein modification; peptidyl-diphthamide biosynthesis. Its function is as follows. Catalyzes the demethylation of diphthine methyl ester to form diphthine, an intermediate in diphthamide biosynthesis, a post-translational modification of histidine which occurs in translation elongation factor 2 (eft201 and eft202). The polypeptide is Diphthine methyltransferase (rrt2) (Schizosaccharomyces pombe (strain 972 / ATCC 24843) (Fission yeast)).